Here is a 623-residue protein sequence, read N- to C-terminus: Pentatricopeptide repeat-containing protein At5g15340, mitochondrial (623 aa).

The N-terminal 16 residues, 1–16 (MKCLSYQKVRLLLRHC), are a transit peptide targeting the mitochondrion. 11 PPR repeats span residues 42–72 (RSYL…IPLS), 75–109 (DNVD…RVEI), 110–144 (DDVS…GVLT), 145–179 (SVKV…SVVS), 180–206 (WTVV…MPER), 207–237 (NAVA…MVFR), 243–277 (NFVT…EMMM), 285–319 (DVMV…NVVT), 320–346 (WNAL…MIRE), 350–384 (DDLT…GLEP), and 385–419 (KVDH…PNEV). Residues 420 to 495 (VLGSLLGSCS…IPGLSSIYVN (76 aa)) form a type E motif region. Residues 496-526 (DSVHRFSSGDRSHPRTKEIYLKLNEVIERIR) are type E(+) motif. A type DYW motif region spans residues 527 to 623 (SAGYVPDVSG…GGSCSCSDYW (97 aa)).

This sequence belongs to the PPR family. PCMP-H subfamily.

Its subcellular location is the mitochondrion. In Arabidopsis thaliana (Mouse-ear cress), this protein is Pentatricopeptide repeat-containing protein At5g15340, mitochondrial (PCMP-H91).